A 496-amino-acid polypeptide reads, in one-letter code: MSAVNVAPELINADNTITYDAIVIGAGVIGPCVATGLARKGKKVLIVERDWAMPDRIVGELMQPGGVRALRSLGMIQSINNIEAYPVTGYTVFFNGEQVDIPYPYKADIPKVEKLKDLVKDGNDKVLEDSTIHIKDYEDDERERGVAFVHGRFLNNLRNITAQEPNVTRVQGNCIEILKDEKNEVVGAKVDIDGRGKVEFKAHLTFICDGIFSRFRKELHPDHVPTVGSSFVGMSLFNAKNPAPMHGHVILGSDHMPILVYQISPEETRILCAYNSPKVPADIKSWMIKDVQPFIPKSLRPSFDEAVSQGKFRAMPNSYLPARQNDVTGMCVIGDALNMRHPLTGGGMTVGLHDVVLLIKKIGDLDFSDREKVLDELLDYHFERKSYDSVINVLSVALYSLFAADSDNLKALQKGCFKYFQRGGDCVNKPVEFLSGVLPKPLQLTRVFFAVAFYTIYLNMEERGFLGLPMALLEGIMILITAIRVFTPFLFGELIG.

The Cytoplasmic segment spans residues 1-16; that stretch reads MSAVNVAPELINADNT. A helical transmembrane segment spans residues 17 to 37; the sequence is ITYDAIVIGAGVIGPCVATGL. FAD contacts are provided by residues 28–29, 48–49, R56, and R158; these read VI and ER. Topologically, residues 38–474 are lumenal; the sequence is ARKGKKVLIV…FLGLPMALLE (437 aa). Glycyl lysine isopeptide (Lys-Gly) (interchain with G-Cter in ubiquitin) cross-links involve residues K284, K289, and K311. FAD is bound by residues D335 and M348. The chain crosses the membrane as a helical span at residues 475–495; sequence GIMILITAIRVFTPFLFGELI. A topological domain (cytoplasmic) is located at residue G496.

The protein belongs to the squalene monooxygenase family. As to quaternary structure, interacts with ERG28. Requires FAD as cofactor.

Its subcellular location is the microsome membrane. The protein localises to the endoplasmic reticulum membrane. The protein resides in the lipid droplet. The catalysed reaction is squalene + reduced [NADPH--hemoprotein reductase] + O2 = (S)-2,3-epoxysqualene + oxidized [NADPH--hemoprotein reductase] + H2O + H(+). It participates in terpene metabolism; lanosterol biosynthesis; lanosterol from farnesyl diphosphate: step 2/3. With respect to regulation, inhibited by the allylamine antimycotic drugs. Squalene epoxidase; part of the third module of ergosterol biosynthesis pathway that includes the late steps of the pathway. ERG1 catalyzes the epoxidation of squalene into 2,3-epoxysqualene. The third module or late pathway involves the ergosterol synthesis itself through consecutive reactions that mainly occur in the endoplasmic reticulum (ER) membrane. Firstly, the squalene synthase ERG9 catalyzes the condensation of 2 farnesyl pyrophosphate moieties to form squalene, which is the precursor of all steroids. Squalene synthase is crucial for balancing the incorporation of farnesyl diphosphate (FPP) into sterol and nonsterol isoprene synthesis. Secondly, the squalene epoxidase ERG1 catalyzes the stereospecific oxidation of squalene to (S)-2,3-epoxysqualene, which is considered to be a rate-limiting enzyme in steroid biosynthesis. Then, the lanosterol synthase ERG7 catalyzes the cyclization of (S)-2,3 oxidosqualene to lanosterol, a reaction that forms the sterol core. In the next steps, lanosterol is transformed to zymosterol through a complex process involving various demethylation, reduction and desaturation reactions. The lanosterol 14-alpha-demethylase ERG11 (also known as CYP51) catalyzes C14-demethylation of lanosterol to produce 4,4'-dimethyl cholesta-8,14,24-triene-3-beta-ol, which is critical for ergosterol biosynthesis. The C-14 reductase ERG24 reduces the C14=C15 double bond of 4,4-dimethyl-cholesta-8,14,24-trienol to produce 4,4-dimethyl-cholesta-8,24-dienol. 4,4-dimethyl-cholesta-8,24-dienol is substrate of the C-4 demethylation complex ERG25-ERG26-ERG27 in which ERG25 catalyzes the three-step monooxygenation required for the demethylation of 4,4-dimethyl and 4alpha-methylsterols, ERG26 catalyzes the oxidative decarboxylation that results in a reduction of the 3-beta-hydroxy group at the C-3 carbon to an oxo group, and ERG27 is responsible for the reduction of the keto group on the C-3. ERG28 has a role as a scaffold to help anchor ERG25, ERG26 and ERG27 to the endoplasmic reticulum and ERG29 regulates the activity of the iron-containing C4-methylsterol oxidase ERG25. Then, the sterol 24-C-methyltransferase ERG6 catalyzes the methyl transfer from S-adenosyl-methionine to the C-24 of zymosterol to form fecosterol. The C-8 sterol isomerase ERG2 catalyzes the reaction which results in unsaturation at C-7 in the B ring of sterols and thus converts fecosterol to episterol. The sterol-C5-desaturase ERG3 then catalyzes the introduction of a C-5 double bond in the B ring to produce 5-dehydroepisterol. The C-22 sterol desaturase ERG5 further converts 5-dehydroepisterol into ergosta-5,7,22,24(28)-tetraen-3beta-ol by forming the C-22(23) double bond in the sterol side chain. Finally, ergosta-5,7,22,24(28)-tetraen-3beta-ol is substrate of the C-24(28) sterol reductase ERG4 to produce ergosterol. The sequence is that of Squalene epoxidase ERG1 from Saccharomyces cerevisiae (strain ATCC 204508 / S288c) (Baker's yeast).